A 339-amino-acid chain; its full sequence is UDP-N-acetylenolpyruvoylglucosamine reductase (339 aa).

The FAD-binding PCMH-type domain maps to 19-189; the sequence is VDVQARLFAQ…LRVRFKLSRE (171 aa). Residue R166 is part of the active site. The active-site Proton donor is the S239. The active site involves E335.

It belongs to the MurB family. The cofactor is FAD.

The protein localises to the cytoplasm. The catalysed reaction is UDP-N-acetyl-alpha-D-muramate + NADP(+) = UDP-N-acetyl-3-O-(1-carboxyvinyl)-alpha-D-glucosamine + NADPH + H(+). Its pathway is cell wall biogenesis; peptidoglycan biosynthesis. In terms of biological role, cell wall formation. The sequence is that of UDP-N-acetylenolpyruvoylglucosamine reductase from Pseudomonas syringae pv. tomato (strain ATCC BAA-871 / DC3000).